The following is a 666-amino-acid chain: Neopullulanase 1 (666 aa).

The first 29 residues, methionine 1 to alanine 29, serve as a signal peptide directing secretion. Residues alanine 31, aspartate 33, asparagine 35, aspartate 71, aspartate 125, asparagine 174, aspartate 176, asparagine 179, aspartate 180, glycine 216, and aspartate 218 each coordinate Ca(2+). Histidine 296 contacts substrate. The Ca(2+) site is built by aspartate 305, asparagine 309, phenylalanine 310, serine 312, and glutamate 317. Arginine 383 provides a ligand contact to substrate. The Nucleophile role is filled by aspartate 385. Glutamate 425 (proton donor) is an active-site residue. Substrate is bound by residues histidine 500–aspartate 501, aspartate 545, and arginine 549.

It belongs to the glycosyl hydrolase 13 family. It depends on Ca(2+) as a cofactor.

The protein localises to the secreted. The enzyme catalyses Hydrolysis of pullulan to panose (6-alpha-D-glucosylmaltose).. In terms of biological role, endohydrolysis of 1,4-alpha-glucosidic linkages in pullulan to form panose. Also hydrolyzes cyclodextrins. The polypeptide is Neopullulanase 1 (tvaI) (Thermoactinomyces vulgaris).